We begin with the raw amino-acid sequence, 198 residues long: Pyridoxine/pyridoxamine 5'-phosphate oxidase 2 (198 aa).

Residues Arg-42, 59–60 (NT), Lys-66, and 121–122 (RS) each bind FMN.

This sequence belongs to the pyridoxamine 5'-phosphate oxidase family. Homodimer. Requires FMN as cofactor.

It catalyses the reaction pyridoxamine 5'-phosphate + O2 + H2O = pyridoxal 5'-phosphate + H2O2 + NH4(+). The catalysed reaction is pyridoxine 5'-phosphate + O2 = pyridoxal 5'-phosphate + H2O2. The protein operates within cofactor metabolism; pyridoxal 5'-phosphate salvage; pyridoxal 5'-phosphate from pyridoxamine 5'-phosphate: step 1/1. It participates in cofactor metabolism; pyridoxal 5'-phosphate salvage; pyridoxal 5'-phosphate from pyridoxine 5'-phosphate: step 1/1. Its function is as follows. Catalyzes the oxidation of either pyridoxine 5'-phosphate (PNP) or pyridoxamine 5'-phosphate (PMP) into pyridoxal 5'-phosphate (PLP). Has an in vitro catalytic efficiency for PNP approximately 300-fold lower than that of PPOX1. The protein is Pyridoxine/pyridoxamine 5'-phosphate oxidase 2 (PPOX2) of Arabidopsis thaliana (Mouse-ear cress).